A 422-amino-acid chain; its full sequence is Keratin, type I cytoskeletal 23 (422 aa).

A compositionally biased stretch (polar residues) spans 1–24 (MNSSHSFNQTYSASVHSLGSTRGR). The disordered stretch occupies residues 1-35 (MNSSHSFNQTYSASVHSLGSTRGRQGSCHRAPSVH). The head stretch occupies residues 1–71 (MNSSHSFNQT…GRSSPLLGGN (71 aa)). A coil 1A region spans residues 72 to 107 (GKATMQNLNDRLATYLEKVRALEEANSKLETRILRW). The region spanning 72-382 (GKATMQNLND…RLLEGDTEGT (311 aa)) is the IF rod domain. Residues 108 to 125 (HQEREPSHRKDYSQYEEN) form a linker 1 region. The interval 126–217 (ISRLQEQIVD…KRHEQEMEEN (92 aa)) is coil 1B. The linker 12 stretch occupies residues 218–240 (HLPSDFKVSVKVDTTPGEDLIKV). Positions 241 to 378 (LEDMRQEYEL…ATYRRLLEGD (138 aa)) are coil 2. Residues 379–422 (TEGTMDGSESRLKGSEASTIKAITQESVNGRIVLSQVNEIQKHI) form a rod-like helical tail region.

It belongs to the intermediate filament family. As to quaternary structure, heterotetramer of two type I and two type II keratins.

This chain is Keratin, type I cytoskeletal 23 (Krt23), found in Mus musculus (Mouse).